The following is a 182-amino-acid chain: NADH-quinone oxidoreductase subunit I (182 aa).

2 4Fe-4S ferredoxin-type domains span residues 52–82 (LTRDPDGEERCVACNLCAVACPVGCISLQKA) and 92–121 (DFFRINFSRCIFCGLCEEACPTTAIQLTPD). Residues Cys-62, Cys-65, Cys-68, Cys-72, Cys-101, Cys-104, Cys-107, and Cys-111 each coordinate [4Fe-4S] cluster.

Belongs to the complex I 23 kDa subunit family. In terms of assembly, NDH-1 is composed of 13 different subunits. Subunits NuoA, H, J, K, L, M, N constitute the membrane sector of the complex. Requires [4Fe-4S] cluster as cofactor.

The protein resides in the cell inner membrane. It catalyses the reaction a quinone + NADH + 5 H(+)(in) = a quinol + NAD(+) + 4 H(+)(out). Its function is as follows. NDH-1 shuttles electrons from NADH, via FMN and iron-sulfur (Fe-S) centers, to quinones in the respiratory chain. The immediate electron acceptor for the enzyme in this species is believed to be ubiquinone. Couples the redox reaction to proton translocation (for every two electrons transferred, four hydrogen ions are translocated across the cytoplasmic membrane), and thus conserves the redox energy in a proton gradient. In Pseudomonas syringae pv. syringae (strain B728a), this protein is NADH-quinone oxidoreductase subunit I.